The following is a 374-amino-acid chain: UDP-N-acetylglucosamine--N-acetylmuramyl-(pentapeptide) pyrophosphoryl-undecaprenol N-acetylglucosamine transferase (374 aa).

UDP-N-acetyl-alpha-D-glucosamine is bound by residues 13 to 15, Asn-124, Arg-165, Ser-193, and Gln-294; that span reads TGG.

Belongs to the glycosyltransferase 28 family. MurG subfamily.

It localises to the cell inner membrane. The enzyme catalyses di-trans,octa-cis-undecaprenyl diphospho-N-acetyl-alpha-D-muramoyl-L-alanyl-D-glutamyl-meso-2,6-diaminopimeloyl-D-alanyl-D-alanine + UDP-N-acetyl-alpha-D-glucosamine = di-trans,octa-cis-undecaprenyl diphospho-[N-acetyl-alpha-D-glucosaminyl-(1-&gt;4)]-N-acetyl-alpha-D-muramoyl-L-alanyl-D-glutamyl-meso-2,6-diaminopimeloyl-D-alanyl-D-alanine + UDP + H(+). It functions in the pathway cell wall biogenesis; peptidoglycan biosynthesis. Cell wall formation. Catalyzes the transfer of a GlcNAc subunit on undecaprenyl-pyrophosphoryl-MurNAc-pentapeptide (lipid intermediate I) to form undecaprenyl-pyrophosphoryl-MurNAc-(pentapeptide)GlcNAc (lipid intermediate II). This Rhizobium etli (strain CIAT 652) protein is UDP-N-acetylglucosamine--N-acetylmuramyl-(pentapeptide) pyrophosphoryl-undecaprenol N-acetylglucosamine transferase.